A 73-amino-acid chain; its full sequence is Large ribosomal subunit protein bL31 (73 aa).

Residues C16, C18, C37, and C40 each contribute to the Zn(2+) site.

The protein belongs to the bacterial ribosomal protein bL31 family. Type A subfamily. Part of the 50S ribosomal subunit. Requires Zn(2+) as cofactor.

Functionally, binds the 23S rRNA. The protein is Large ribosomal subunit protein bL31 of Blochmanniella floridana.